Reading from the N-terminus, the 157-residue chain is Small ribosomal subunit protein uS7 (157 aa).

It belongs to the universal ribosomal protein uS7 family. In terms of assembly, part of the 30S ribosomal subunit. Contacts proteins S9 and S11.

One of the primary rRNA binding proteins, it binds directly to 16S rRNA where it nucleates assembly of the head domain of the 30S subunit. Is located at the subunit interface close to the decoding center, probably blocks exit of the E-site tRNA. The chain is Small ribosomal subunit protein uS7 from Chlamydia trachomatis serovar A (strain ATCC VR-571B / DSM 19440 / HAR-13).